Reading from the N-terminus, the 63-residue chain is Large ribosomal subunit protein bL28 (63 aa).

The disordered stretch occupies residues 1–22 (MSRRCAITGKSAMNGHSVSHAN).

Belongs to the bacterial ribosomal protein bL28 family.

In Campylobacter hominis (strain ATCC BAA-381 / DSM 21671 / CCUG 45161 / LMG 19568 / NCTC 13146 / CH001A), this protein is Large ribosomal subunit protein bL28.